Reading from the N-terminus, the 65-residue chain is Large ribosomal subunit protein bL35 (65 aa).

It belongs to the bacterial ribosomal protein bL35 family.

The protein is Large ribosomal subunit protein bL35 of Clostridium kluyveri (strain NBRC 12016).